The sequence spans 279 residues: MMTQMKTSSDEMKVAIIANGKPQSRRVASKLFNAFRDDPDFYLTKKNPDVLISIGGDGMLLSAFHMYEKELARVRFVGIHTGHLGFYTDYLDSEVDQLIETLRKDSGAKISYPLLNVKLTLADGRSFTSIALNEAAIKRNEKTMAADVCLNDVLFESFRGDGLSVSTPTGSTAYNKSLGGAVLHPTIEALQLTEIASLNNRVYRTLGSPLIVPKHEKITVYPTRMGSYTLSVDNKTYINRNVKKVEFSIDQRKISFVASASHTSFWERVRESFIGDMEE.

Catalysis depends on Asp57, which acts as the Proton acceptor. NAD(+) contacts are provided by residues 57–58 (DG), 133–134 (NE), Arg159, Asp161, 172–177 (TAYNKS), and Ala196.

Belongs to the NAD kinase family. The cofactor is a divalent metal cation.

It localises to the cytoplasm. The catalysed reaction is NAD(+) + ATP = ADP + NADP(+) + H(+). Functionally, involved in the regulation of the intracellular balance of NAD and NADP, and is a key enzyme in the biosynthesis of NADP. Catalyzes specifically the phosphorylation on 2'-hydroxyl of the adenosine moiety of NAD to yield NADP. The polypeptide is NAD kinase (Streptococcus thermophilus (strain CNRZ 1066)).